Consider the following 457-residue polypeptide: MMDSQQHGEQLKRGLKNRHIQLIALGGAIGTGLFLGSASVIQSAGPGIILGYAIAGFIAFLIMRQLGEMVVEEPVAGSFSHFAYKYWGGFAGFASGWNYWVLYVLVAMAELTAVGKYIQFWYPEIPTWASAAAFFVIINAINLTNVKVFGEMEFWFAIIKVIAVIAMILFGAWLLFSDTAGPQATVRNLWEQGGFLPHGWTGLVMMMAIIMFSFGGLELVGITAAEADNPEQSIPKATNQVIYRILIFYIGSLAVLLSLLPWTRVTADTSPFVLIFHELGDTFVANALNIVVLTAALSVYNSCVYCNSRMLFGLAQQGNAPKALLNVDKRGVPVSSILVSAVVTALCVLLNYLAPESAFGLLMALVVSALVINWAMISLAHMMFRRAKQQQGVKTRFPALFYPFGNVLCLLFMAAVLIIMLMTPGMAISVWLIPVWLLILGVGYLCKEKTAKTVKAH.

Residues 1 to 20 (MMDSQQHGEQLKRGLKNRHI) are Cytoplasmic-facing. A helical membrane pass occupies residues 21–41 (QLIALGGAIGTGLFLGSASVI). A topological domain (periplasmic) is located at residue Gln42. A helical transmembrane segment spans residues 43 to 63 (SAGPGIILGYAIAGFIAFLIM). At 64–86 (RQLGEMVVEEPVAGSFSHFAYKY) the chain is on the cytoplasmic side. A helical transmembrane segment spans residues 87–107 (WGGFAGFASGWNYWVLYVLVA). The Periplasmic segment spans residues 108–117 (MAELTAVGKY). The chain crosses the membrane as a helical span at residues 118–138 (IQFWYPEIPTWASAAAFFVII). At 139-155 (NAINLTNVKVFGEMEFW) the chain is on the cytoplasmic side. The helical transmembrane segment at 156-176 (FAIIKVIAVIAMILFGAWLLF) threads the bilayer. Topologically, residues 177–201 (SDTAGPQATVRNLWEQGGFLPHGWT) are periplasmic. A helical transmembrane segment spans residues 202-222 (GLVMMMAIIMFSFGGLELVGI). Residues 223–240 (TAAEADNPEQSIPKATNQ) lie on the Cytoplasmic side of the membrane. Residues 241–261 (VIYRILIFYIGSLAVLLSLLP) traverse the membrane as a helical segment. The Periplasmic portion of the chain corresponds to 262–271 (WTRVTADTSP). A helical membrane pass occupies residues 272–292 (FVLIFHELGDTFVANALNIVV). Topologically, residues 293-333 (LTAALSVYNSCVYCNSRMLFGLAQQGNAPKALLNVDKRGVP) are cytoplasmic. A helical membrane pass occupies residues 334 to 354 (VSSILVSAVVTALCVLLNYLA). Residues 355–358 (PESA) lie on the Periplasmic side of the membrane. A helical transmembrane segment spans residues 359-379 (FGLLMALVVSALVINWAMISL). The Cytoplasmic segment spans residues 380–400 (AHMMFRRAKQQQGVKTRFPAL). A helical membrane pass occupies residues 401–421 (FYPFGNVLCLLFMAAVLIIML). Over 422–425 (MTPG) the chain is Periplasmic. The helical transmembrane segment at 426-446 (MAISVWLIPVWLLILGVGYLC) threads the bilayer. Over 447–457 (KEKTAKTVKAH) the chain is Cytoplasmic.

Belongs to the amino acid-polyamine-organocation (APC) superfamily. Amino acid transporter (AAT) (TC 2.A.3.1) family.

Its subcellular location is the cell inner membrane. The enzyme catalyses L-phenylalanine(in) + H(+)(in) = L-phenylalanine(out) + H(+)(out). It catalyses the reaction L-tryptophan(in) + H(+)(in) = L-tryptophan(out) + H(+)(out). It carries out the reaction L-tyrosine(in) + H(+)(in) = L-tyrosine(out) + H(+)(out). In terms of biological role, permease that is involved in the active transport across the cytoplasmic membrane of all three aromatic amino acids, phenylalanine, tyrosine and tryptophan. The chain is Aromatic amino acid transport protein AroP (aroP) from Salmonella typhi.